The chain runs to 246 residues: MHLLSLLFPVIALIPTVLSHGYVSGIVANGVYTAGWQVSYWYDIINKVPYPQTPGWYEEALDLGFVAPDQYSTSDIICHKNAVNANVSATVAAGGTVQFQWTTWPHNIGPVLTYVANCGGSCSTVNKNNLKWVKIDQSGINFSTQVWATGALMANNNTWTSTVPKTLAAGHYIFRHEIIALHGATTANGAQNYPFCVNIDVTGSGTASPAGVAATSFYKATDPGILFNPYVTLSNYTIPGPALWTG.

Positions 1–19 (MHLLSLLFPVIALIPTVLS) are cleaved as a signal peptide. H20 contacts Cu(2+). A disulfide bond links C78 and C196. N86, N141, and N156 each carry an N-linked (GlcNAc...) asparagine glycan. O2 contacts are provided by H182 and Q191. Cu(2+) is bound at residue Y193. N-linked (GlcNAc...) asparagine glycosylation is present at N235.

The protein belongs to the polysaccharide monooxygenase AA9 family. Requires Cu(2+) as cofactor.

The protein localises to the secreted. It catalyses the reaction [(1-&gt;4)-beta-D-glucosyl]n+m + reduced acceptor + O2 = 4-dehydro-beta-D-glucosyl-[(1-&gt;4)-beta-D-glucosyl]n-1 + [(1-&gt;4)-beta-D-glucosyl]m + acceptor + H2O.. Functionally, lytic polysaccharide monooxygenase (LPMO) that depolymerizes crystalline and amorphous polysaccharides via the oxidation of scissile alpha- or beta-(1-4)-glycosidic bonds, yielding C1 and C4 oxidation products. Catalysis by LPMOs requires the reduction of the active-site copper from Cu(II) to Cu(I) by a reducing agent and H(2)O(2) or O(2) as a cosubstrate. The sequence is that of AA9 family lytic polysaccharide monooxygenase D from Botryotinia fuckeliana (strain B05.10) (Noble rot fungus).